The chain runs to 664 residues: E3 ubiquitin-protein ligase CHFR (664 aa).

The segment at 1 to 21 is disordered; it reads MERPEEGKQSPPPQPWGRLLR. The FHA domain maps to 38 to 89; sequence WTIGRRRGCDLSFPSNKLVSGDHCRIVVDEKSGQVTLEDTSTSGTVINKLKV. The disordered stretch occupies residues 142–267; it reads FHGTKDTSGA…KKMRGDGDLD (126 aa). Low complexity predominate over residues 186 to 198; the sequence is PTASASSTEPSPA. Phosphoserine is present on serine 244. A compositionally biased stretch (basic and acidic residues) spans 254-264; that stretch reads EPVKKKMRGDG. Residues 304-343 form an RING-type zinc finger; that stretch reads CIICQDLLHDCVSLQPCMHTFCAACYSGWMERSSLCPTCR. Threonine 386 carries the phosphothreonine modification. Disordered regions lie at residues 388–417 and 439–461; these read DMLQ…VDSE and AQPP…GDAP. Residues 400–417 show a composition bias toward acidic residues; the sequence is DEEGSSEDLLELSDVDSE. A PBZ-type zinc finger spans residues 633–655; it reads PDCYWGRNCRTQVKAHHAMKFNH.

It belongs to the CHFR family. As to quaternary structure, interacts with HDAC1 and HDAC2. Interacts with PML (with sumoylated form of PML). In terms of processing, poly-ADP-ribosylated. In addition to binding non covalently poly(ADP-ribose) via its PBZ-type zinc finger, the protein is also covalently poly-ADP-ribosylated by PARP1. Autoubiquitinated; may regulate its cellular level. Post-translationally, phosphorylated by PKB. Phosphorylation may affect its E3 ligase activity. As to expression, ubiquitous.

The protein resides in the nucleus. The protein localises to the PML body. The catalysed reaction is S-ubiquitinyl-[E2 ubiquitin-conjugating enzyme]-L-cysteine + [acceptor protein]-L-lysine = [E2 ubiquitin-conjugating enzyme]-L-cysteine + N(6)-ubiquitinyl-[acceptor protein]-L-lysine.. Its pathway is protein modification; protein ubiquitination. Functionally, E3 ubiquitin-protein ligase that functions in the antephase checkpoint by actively delaying passage into mitosis in response to microtubule poisons. Acts in early prophase before chromosome condensation, when the centrosome move apart from each other along the periphery of the nucleus. Probably involved in signaling the presence of mitotic stress caused by microtubule poisons by mediating the 'Lys-48'-linked ubiquitination of target proteins, leading to their degradation by the proteasome. Promotes the ubiquitination and subsequent degradation of AURKA and PLK1. Probably acts as a tumor suppressor, possibly by mediating the polyubiquitination of HDAC1, leading to its degradation. May also promote the formation of 'Lys-63'-linked polyubiquitin chains and functions with the specific ubiquitin-conjugating UBC13-MMS2 (UBE2N-UBE2V2) heterodimer. Substrates that are polyubiquitinated at 'Lys-63' are usually not targeted for degradation, but are rather involved in signaling cellular stress. The protein is E3 ubiquitin-protein ligase CHFR (CHFR) of Homo sapiens (Human).